Here is a 315-residue protein sequence, read N- to C-terminus: Methionyl-tRNA formyltransferase (315 aa).

113–116 (SLLP) provides a ligand contact to (6S)-5,6,7,8-tetrahydrofolate.

The protein belongs to the Fmt family.

The catalysed reaction is L-methionyl-tRNA(fMet) + (6R)-10-formyltetrahydrofolate = N-formyl-L-methionyl-tRNA(fMet) + (6S)-5,6,7,8-tetrahydrofolate + H(+). Attaches a formyl group to the free amino group of methionyl-tRNA(fMet). The formyl group appears to play a dual role in the initiator identity of N-formylmethionyl-tRNA by promoting its recognition by IF2 and preventing the misappropriation of this tRNA by the elongation apparatus. This chain is Methionyl-tRNA formyltransferase, found in Pectobacterium atrosepticum (strain SCRI 1043 / ATCC BAA-672) (Erwinia carotovora subsp. atroseptica).